Reading from the N-terminus, the 167-residue chain is Seroin (167 aa).

Residues 1 to 17 (MATKILIFLSFVALSSA) form the signal peptide. Asn-26 is a glycosylation site (N-linked (GlcNAc...) asparagine). Tandem repeats lie at residues 38–46 (PPLPQPPPL), 56–64 (PPLPQPPPL), 76–78 (PPI), 79–81 (PPI), and 82–84 (PPI). Residues 145–167 (VNETIVGDNPPKFEESRKESSSN) are disordered. N-linked (GlcNAc...) asparagine glycosylation is present at Asn-146. The segment covering 155–167 (PKFEESRKESSSN) has biased composition (basic and acidic residues).

In terms of tissue distribution, produced by both the posterior (PSG) and middle (MSG) sections of silk glands.

It localises to the secreted. In Galleria mellonella (Greater wax moth), this protein is Seroin.